Consider the following 232-residue polypeptide: RNA chaperone ProQ (232 aa).

The segment at 105–182 (EAKARVQAQR…REEQHTPVSD (78 aa)) is disordered. The segment covering 117-136 (QQAKKREAAAAAGEKEDAPR) has biased composition (basic and acidic residues). Residues 137–146 (RERKPRPTTP) are compositionally biased toward basic residues. The span at 147-177 (RRKEGAERKPRAQKPVEKAPKTVKAPREEQH) shows a compositional bias: basic and acidic residues.

The protein belongs to the ProQ family.

The protein resides in the cytoplasm. Functionally, RNA chaperone with significant RNA binding, RNA strand exchange and RNA duplexing activities. May regulate ProP activity through an RNA-based, post-transcriptional mechanism. The chain is RNA chaperone ProQ from Shigella boydii serotype 18 (strain CDC 3083-94 / BS512).